Here is a 307-residue protein sequence, read N- to C-terminus: Elongation factor Ts (307 aa).

An involved in Mg(2+) ion dislocation from EF-Tu region spans residues 80–83; that stretch reads TDFV.

It belongs to the EF-Ts family.

The protein resides in the cytoplasm. In terms of biological role, associates with the EF-Tu.GDP complex and induces the exchange of GDP to GTP. It remains bound to the aminoacyl-tRNA.EF-Tu.GTP complex up to the GTP hydrolysis stage on the ribosome. This is Elongation factor Ts from Clostridium botulinum (strain 657 / Type Ba4).